Here is a 319-residue protein sequence, read N- to C-terminus: Shiga-like toxin 2 subunit A (319 aa).

Positions 1 to 22 are cleaved as a signal peptide; that stretch reads MKCILFKWVLCLLLGFSSVSYS. The interval 23–272 is A1; that stretch reads REFTIDFSTQ…CHHQGARSVR (250 aa). The active site involves glutamate 189. Residues cysteine 263 and cysteine 282 are joined by a disulfide bond. Residues 273–314 form an A2 region; the sequence is AVNEESQPECQITGDRPVIKINNTLWESNTAAAFLNRKSQFL.

Belongs to the ribosome-inactivating protein family. In terms of assembly, shiga-like toxin contains a single A subunit and multiple copies of a B subunit.

The protein localises to the secreted. It carries out the reaction Endohydrolysis of the N-glycosidic bond at one specific adenosine on the 28S rRNA.. Functionally, the A subunit is responsible for inhibiting protein synthesis through the catalytic inactivation of 60S ribosomal subunits. After endocytosis, the A subunit is cleaved by furin in two fragments, A1 and A2: A1 is the catalytically active fragment, and A2 is essential for holotoxin assembly with the B subunits. The sequence is that of Shiga-like toxin 2 subunit A (stxA2) from Escherichia coli O157:H7 (Bacteriophage 933W).